The primary structure comprises 86 residues: Insulin (86 aa).

3 cysteine pairs are disulfide-bonded: cysteine 7–cysteine 72, cysteine 19–cysteine 85, and cysteine 71–cysteine 76. A propeptide spans 33–63 (c peptide); sequence EAEDPQVGEVELGGGPGLGGLQPLALAGPQQ.

This sequence belongs to the insulin family. In terms of assembly, heterodimer of a B chain and an A chain linked by two disulfide bonds.

The protein localises to the secreted. Insulin decreases blood glucose concentration. It increases cell permeability to monosaccharides, amino acids and fatty acids. It accelerates glycolysis, the pentose phosphate cycle, and glycogen synthesis in liver. The chain is Insulin (INS) from Equus caballus (Horse).